Consider the following 64-residue polypeptide: Conotoxin Im11.1 (64 aa).

The first 26 residues, 1 to 26 (MMFRLTSVSCFLLVIACLNLVVLTNA), serve as a signal peptide directing secretion. 4 cysteine pairs are disulfide-bonded: Cys27-Cys41, Cys34-Cys46, Cys40-Cys50, and Cys45-Cys54. Residue Asn57 is modified to Asparagine amide. Residues 61–64 (ATFQ) constitute a propeptide that is removed on maturation.

Belongs to the conotoxin I2 superfamily. As to expression, expressed by the venom duct.

The protein resides in the secreted. This chain is Conotoxin Im11.1, found in Conus imperialis (Imperial cone).